A 233-amino-acid polypeptide reads, in one-letter code: MSFAAAQATYVLHSRPYKETSALVDFFTPLGRLRAVLRGARGKAGALARPFVPLEAEWRGRGELKTVARLESAGIPNLLNGQALFSGLYLNELLIRLLPAEDPQPEIFAHYAATLPLLAAGRPIEPLLRAFEWRLLEQLGYGFALDVDIDGRPIEPQALYQLLPEAGLEPVAQLQPGLFQGSELLSMADADWSAPGALAAAKRLMRQALAPHLGGRPLVSRELFMNRKESPRD.

Belongs to the RecO family.

Functionally, involved in DNA repair and RecF pathway recombination. This Pseudomonas aeruginosa (strain UCBPP-PA14) protein is DNA repair protein RecO.